The primary structure comprises 86 residues: Large ribosomal subunit protein bL31B (86 aa).

It belongs to the bacterial ribosomal protein bL31 family. Type B subfamily. In terms of assembly, part of the 50S ribosomal subunit.

In Saccharopolyspora erythraea (strain ATCC 11635 / DSM 40517 / JCM 4748 / NBRC 13426 / NCIMB 8594 / NRRL 2338), this protein is Large ribosomal subunit protein bL31B.